A 137-amino-acid chain; its full sequence is Basic phospholipase A2 homolog 2 (137 aa).

The first 16 residues, 1 to 16, serve as a signal peptide directing secretion; that stretch reads MRTLWIMAVLLVGVEG. 7 cysteine pairs are disulfide-bonded: cysteine 42/cysteine 131, cysteine 44/cysteine 60, cysteine 59/cysteine 111, cysteine 65/cysteine 137, cysteine 66/cysteine 104, cysteine 73/cysteine 97, and cysteine 91/cysteine 102. Residues 121 to 133 form an important for membrane-damaging activities in eukaryotes and bacteria; heparin-binding region; sequence KKYRYYLKPLCKK.

Belongs to the phospholipase A2 family. Group II subfamily. K49 sub-subfamily. As to quaternary structure, homodimer; non-covalently linked. Binds to heparin. Post-translationally, it binds long-chain fatty acids covalently by a rapid, spontaneous, and autocatalytic process. When acylated, it binds to the surface of liposomes and isolated muscle membranes, with the fatty acid moiety inserted into the lipid bilayer and possibly acting as an anchor. As to expression, expressed by the venom gland.

It is found in the secreted. With respect to regulation, heparin inhibits the myotoxic activity. Suramin inhibits the myotoxic activity. High level of membrane cholesterol content reduces cytolytic activity, whereas low level of membrane cholesterol content increases cytolytic activity. Its function is as follows. Snake venom phospholipase A2 homolog that lacks enzymatic activity. Is myotoxic and induces a dose-dependent edema in the mouse foot pad. Also exhibits strong anticoagulant effects by binding to factor Xa (F10) and inhibiting the prothrombinase activity (IC(50) is 3 nM). In addition, it shows cytotoxic activity to a variety of cell types and bactericidal activity to a variety of Gram-negative and Gram-positive bacteria. Also induces a very rapid release of large amounts of potassium ions and ATP from muscle cells, which accounts for the pain reaction characteristic of viperid envenomations. The released ATP amplifies the effect of the myotoxins, acting as a 'danger signal', which spreads and causes further damage by acting on purinergic receptors. A model of myotoxic mechanism has been proposed: an apo Lys49-PLA2 is activated by the entrance of a hydrophobic molecule (e.g. fatty acid) at the hydrophobic channel of the protein leading to a reorientation of a monomer. This reorientation causes a transition between 'inactive' to 'active' states, causing alignment of C-terminal and membrane-docking sites (MDoS) side-by-side and putting the membrane-disruption sites (MDiS) in the same plane, exposed to solvent and in a symmetric position for both monomers. The MDoS region stabilizes the toxin on membrane by the interaction of charged residues with phospholipid head groups. Subsequently, the MDiS region destabilizes the membrane with penetration of hydrophobic residues. This insertion causes a disorganization of the membrane, allowing an uncontrolled influx of ions (i.e. calcium and sodium), and eventually triggering irreversible intracellular alterations and cell death. This Bothrops asper (Terciopelo) protein is Basic phospholipase A2 homolog 2.